Reading from the N-terminus, the 282-residue chain is Probable ribosomal RNA small subunit methyltransferase A (282 aa).

S-adenosyl-L-methionine contacts are provided by histidine 24, leucine 26, glycine 51, glutamate 72, aspartate 100, and asparagine 115.

The protein belongs to the class I-like SAM-binding methyltransferase superfamily. rRNA adenine N(6)-methyltransferase family. RsmA subfamily.

It localises to the cytoplasm. Functionally, specifically dimethylates two adjacent adenosines in the loop of a conserved hairpin near the 3'-end of 16S rRNA in the 30S particle. May play a critical role in biogenesis of 30S subunits. The polypeptide is Probable ribosomal RNA small subunit methyltransferase A (Halobacterium salinarum (strain ATCC 29341 / DSM 671 / R1)).